The chain runs to 475 residues: Ribulose bisphosphate carboxylase large chain (475 aa).

A propeptide spanning residues 1–2 (MS) is cleaved from the precursor. Position 3 is an N-acetylproline (Pro3). An N6,N6,N6-trimethyllysine modification is found at Lys14. Asn123 and Thr173 together coordinate substrate. Lys175 acts as the Proton acceptor in catalysis. Lys177 provides a ligand contact to substrate. Residues Lys201, Asp203, and Glu204 each contribute to the Mg(2+) site. Lys201 is subject to N6-carboxylysine. The active-site Proton acceptor is His294. The substrate site is built by Arg295, His327, and Ser379.

The protein belongs to the RuBisCO large chain family. Type I subfamily. As to quaternary structure, heterohexadecamer of 8 large chains and 8 small chains; disulfide-linked. The disulfide link is formed within the large subunit homodimers. Requires Mg(2+) as cofactor. The disulfide bond which can form in the large chain dimeric partners within the hexadecamer appears to be associated with oxidative stress and protein turnover.

Its subcellular location is the plastid. The protein resides in the chloroplast. The enzyme catalyses 2 (2R)-3-phosphoglycerate + 2 H(+) = D-ribulose 1,5-bisphosphate + CO2 + H2O. It catalyses the reaction D-ribulose 1,5-bisphosphate + O2 = 2-phosphoglycolate + (2R)-3-phosphoglycerate + 2 H(+). RuBisCO catalyzes two reactions: the carboxylation of D-ribulose 1,5-bisphosphate, the primary event in carbon dioxide fixation, as well as the oxidative fragmentation of the pentose substrate in the photorespiration process. Both reactions occur simultaneously and in competition at the same active site. The polypeptide is Ribulose bisphosphate carboxylase large chain (Adiantum capillus-veneris (Maidenhair fern)).